The sequence spans 767 residues: U3 small nucleolar RNA-associated protein 14 homolog A (767 aa).

Residues 23 to 49 (TSNYPLSASEDEGDSDGERKHQKLLEA) are disordered. Phosphoserine is present on residues Ser-29, Ser-31, Ser-37, Ser-52, Ser-77, and Ser-81. Lys-122 is covalently cross-linked (Glycyl lysine isopeptide (Lys-Gly) (interchain with G-Cter in SUMO2)). Phosphothreonine is present on Thr-205. A coiled-coil region spans residues 317–346 (LEARQAMQEQLAKNKELTQKLQVVSESEEE). The interval 338 to 554 (QVVSESEEEG…SKGKNKKEQM (217 aa)) is disordered. A compositionally biased stretch (acidic residues) spans 342–355 (ESEEEGGADEEEAL). Over residues 398-433 (AAHEFPENEENDKPVAEEDELLKELEKRRSLRKRSE) the composition is skewed to basic and acidic residues. Arg-431 carries the citrulline modification. Residue Lys-447 forms a Glycyl lysine isopeptide (Lys-Gly) (interchain with G-Cter in SUMO2) linkage. At Ser-451 the chain carries Phosphoserine. A compositionally biased stretch (acidic residues) spans 486 to 498 (VWEEEPAPEEDEP). Basic and acidic residues predominate over residues 503-538 (RPERMRTLEELEELGKEDSLPNKERPRPSVEGEQVR). Lys-518 participates in a covalent cross-link: Glycyl lysine isopeptide (Lys-Gly) (interchain with G-Cter in SUMO2). Residue Arg-586 is modified to Citrulline. Residues 730 to 767 (TAEDVDCRSSPRSDVPVMQSNPKQHSKHQKQRKKSSIG) form a disordered region. Basic residues predominate over residues 753–767 (QHSKHQKQRKKSSIG).

Belongs to the UTP14 family. In terms of assembly, interacts with DHX37. Post-translationally, citrullinated by PADI4. In terms of tissue distribution, ubiquitously expressed.

The protein localises to the nucleus. It is found in the nucleolus. Its function is as follows. May be required for ribosome biogenesis. This Mus musculus (Mouse) protein is U3 small nucleolar RNA-associated protein 14 homolog A (Utp14a).